The chain runs to 397 residues: Glutamate 5-kinase (397 aa).

The segment at 1 to 28 (MVADLTSDISESQEQETETNSANNNGAV) is disordered. ATP is bound at residue K40. Residues S80, D168, and N180 each coordinate substrate. ATP is bound by residues 200 to 201 (SD) and 243 to 249 (SGGMASK). In terms of domain architecture, PUA spans 306 to 383 (HGQVYIDQGA…QEIADILGYE (78 aa)).

The protein belongs to the glutamate 5-kinase family.

It is found in the cytoplasm. It catalyses the reaction L-glutamate + ATP = L-glutamyl 5-phosphate + ADP. It functions in the pathway amino-acid biosynthesis; L-proline biosynthesis; L-glutamate 5-semialdehyde from L-glutamate: step 1/2. Catalyzes the transfer of a phosphate group to glutamate to form L-glutamate 5-phosphate. This chain is Glutamate 5-kinase, found in Zymomonas mobilis subsp. mobilis (strain ATCC 31821 / ZM4 / CP4).